A 246-amino-acid polypeptide reads, in one-letter code: DNA repair protein RecO (246 aa).

It belongs to the RecO family.

Functionally, involved in DNA repair and RecF pathway recombination. The sequence is that of DNA repair protein RecO from Alkaliphilus metalliredigens (strain QYMF).